The chain runs to 244 residues: Mitochondrial inner membrane protease atp23 (244 aa).

Residues 1 to 25 (MSSSEGNKPPLVPDSTKESEPQFDP) are disordered. An a divalent metal cation-binding site is contributed by His144. The active site involves Glu145. His148 is a binding site for a divalent metal cation.

Belongs to the peptidase M76 family.

It localises to the mitochondrion inner membrane. Functionally, has a dual role in the assembly of mitochondrial ATPase. Acts as a protease that removes N-terminal residues of mitochondrial ATPase CF(0) subunit 6 at the intermembrane space side. Also involved in the correct assembly of the membrane-embedded ATPase CF(0) particle, probably mediating association of subunit 6 with the subunit 9 ring. This chain is Mitochondrial inner membrane protease atp23 (atp23), found in Botryotinia fuckeliana (strain B05.10) (Noble rot fungus).